Reading from the N-terminus, the 400-residue chain is ELAV-like protein 4 (400 aa).

The segment at 12–48 (TMEPQVSNGPTSNTSNGPSSNSRNCPSPMQTGAATDD) is disordered. Residues 18-33 (SNGPTSNTSNGPSSNS) show a composition bias toward low complexity. Positions 34-44 (RNCPSPMQTGA) are enriched in polar residues. 3 RRM domains span residues 51–158 (TNLI…YARP), 166–246 (ANLY…FANN), and 317–395 (WCIF…FKTN).

Belongs to the RRM elav family.

It is found in the cytoplasm. The protein localises to the perikaryon. The protein resides in the cell projection. Its subcellular location is the axon. It localises to the dendrite. It is found in the growth cone. Its function is as follows. RNA-binding protein that is involved in the post-transcriptional regulation of mRNAs. Plays a role in the regulation of mRNA stability, alternative splicing and translation. Binds to AU-rich element (ARE) sequences in the 3' untranslated region (3'UTR) of target mRNAs. Mainly plays a role in neuron-specific RNA processing. The polypeptide is ELAV-like protein 4 (elavl4) (Xenopus tropicalis (Western clawed frog)).